Here is a 115-residue protein sequence, read N- to C-terminus: Large ribosomal subunit protein bL19 (115 aa).

Belongs to the bacterial ribosomal protein bL19 family.

In terms of biological role, this protein is located at the 30S-50S ribosomal subunit interface and may play a role in the structure and function of the aminoacyl-tRNA binding site. The polypeptide is Large ribosomal subunit protein bL19 (Lactobacillus delbrueckii subsp. bulgaricus (strain ATCC BAA-365 / Lb-18)).